A 342-amino-acid chain; its full sequence is Phosphate acyltransferase (342 aa).

It belongs to the PlsX family. Homodimer. Probably interacts with PlsY.

It localises to the cytoplasm. It catalyses the reaction a fatty acyl-[ACP] + phosphate = an acyl phosphate + holo-[ACP]. Its pathway is lipid metabolism; phospholipid metabolism. In terms of biological role, catalyzes the reversible formation of acyl-phosphate (acyl-PO(4)) from acyl-[acyl-carrier-protein] (acyl-ACP). This enzyme utilizes acyl-ACP as fatty acyl donor, but not acyl-CoA. The chain is Phosphate acyltransferase from Legionella pneumophila (strain Corby).